The following is a 373-amino-acid chain: Flagellar P-ring protein (373 aa).

The signal sequence occupies residues 1–26 (MKLFFRFVTLVAVLAMSLANVAPAWA).

It belongs to the FlgI family. In terms of assembly, the basal body constitutes a major portion of the flagellar organelle and consists of four rings (L,P,S, and M) mounted on a central rod.

The protein localises to the periplasm. The protein resides in the bacterial flagellum basal body. Functionally, assembles around the rod to form the L-ring and probably protects the motor/basal body from shearing forces during rotation. This chain is Flagellar P-ring protein, found in Rhizobium johnstonii (strain DSM 114642 / LMG 32736 / 3841) (Rhizobium leguminosarum bv. viciae).